The chain runs to 159 residues: S-ribosylhomocysteine lyase (159 aa).

Positions 53, 57, and 124 each coordinate Fe cation.

It belongs to the LuxS family. Homodimer. Requires Fe cation as cofactor.

The enzyme catalyses S-(5-deoxy-D-ribos-5-yl)-L-homocysteine = (S)-4,5-dihydroxypentane-2,3-dione + L-homocysteine. Functionally, involved in the synthesis of autoinducer 2 (AI-2) which is secreted by bacteria and is used to communicate both the cell density and the metabolic potential of the environment. The regulation of gene expression in response to changes in cell density is called quorum sensing. Catalyzes the transformation of S-ribosylhomocysteine (RHC) to homocysteine (HC) and 4,5-dihydroxy-2,3-pentadione (DPD). The sequence is that of S-ribosylhomocysteine lyase from Porphyromonas gingivalis (strain ATCC BAA-308 / W83).